Reading from the N-terminus, the 171-residue chain is MLSHLVVGQGLYYGDSIFYAVCFLLLMWIIKVLAWKPVTKMMQDRADKISNDIDSAEKSRNDAAELVQKRQAALASSRSEAQTIVNDAKANGQQQREQIVTQAQADVQTLKQNAQKDIEQERQDALSNARNYVADLSIEIASKIIQRELKADDQKALIDSYIEGLGKQHES.

A helical membrane pass occupies residues 10–30; the sequence is GLYYGDSIFYAVCFLLLMWII.

This sequence belongs to the ATPase B chain family. F-type ATPases have 2 components, F(1) - the catalytic core - and F(0) - the membrane proton channel. F(1) has five subunits: alpha(3), beta(3), gamma(1), delta(1), epsilon(1). F(0) has three main subunits: a(1), b(2) and c(10-14). The alpha and beta chains form an alternating ring which encloses part of the gamma chain. F(1) is attached to F(0) by a central stalk formed by the gamma and epsilon chains, while a peripheral stalk is formed by the delta and b chains.

It localises to the cell membrane. F(1)F(0) ATP synthase produces ATP from ADP in the presence of a proton or sodium gradient. F-type ATPases consist of two structural domains, F(1) containing the extramembraneous catalytic core and F(0) containing the membrane proton channel, linked together by a central stalk and a peripheral stalk. During catalysis, ATP synthesis in the catalytic domain of F(1) is coupled via a rotary mechanism of the central stalk subunits to proton translocation. In terms of biological role, component of the F(0) channel, it forms part of the peripheral stalk, linking F(1) to F(0). In Levilactobacillus brevis (strain ATCC 367 / BCRC 12310 / CIP 105137 / JCM 1170 / LMG 11437 / NCIMB 947 / NCTC 947) (Lactobacillus brevis), this protein is ATP synthase subunit b.